Consider the following 650-residue polypeptide: MICOS complex subunit MIC60, mitochondrial (650 aa).

Residues 1–34 (MLRKSVLELSSRLSIKRFPRNLGAQRFHLSSSRN) constitute a mitochondrion transit peptide. The disordered stretch occupies residues 26-74 (RFHLSSSRNASTSGKNGLPGAKPVGKPDASKVDPPKVTPPPPTKGNSSK). Over residues 28-40 (HLSSSRNASTSGK) the composition is skewed to polar residues. Over 35-74 (ASTSGKNGLPGAKPVGKPDASKVDPPKVTPPPPTKGNSSK) the chain is Mitochondrial matrix. Residues 75 to 95 (VVIGGVAIAGAFLVAYQTGYL) traverse the membrane as a helical segment. The Mitochondrial intermembrane segment spans residues 96-549 (DQYLGKEQQK…FDTLKGTLRH (454 aa)). Disordered stretches follow at residues 121–168 (EAHH…ESDL), 239–267 (QSSS…EDGI), and 284–304 (EGSD…TKET). Residues 284-299 (EGSDTESTGSSSIGEQ) are compositionally biased toward low complexity. Coiled coils occupy residues 345–369 (AQVF…LRAR) and 396–430 (KAIQ…LAKA). The helical transmembrane segment at 550 to 570 (FSLIPPGGGGILAHSLAHVAS) threads the bilayer. The Mitochondrial matrix portion of the chain corresponds to 571-650 (SLKFKEVDQA…QSYATCVSLT (80 aa)).

The protein belongs to the MICOS complex subunit Mic60 family. In terms of assembly, component of the mitochondrial contact site and cristae organizing system (MICOS) complex. The MICOS complex associates with mitochondrial outer membrane proteins. Present in a large lipid-enriched complex called mitochondrial transmembrane lipoprotein (MTL) complex made of proteins located in the two mitochondrial membranes, including the TOM complex and the core components of the MICOS complex and containing at least digalactosyldiacylglycerol (DGDG). Binds to TOM40-1. Component of a mitochondrial large protein complex that contains, at least, MIC60, DGS1, TOM40, TOM20 proteins, and petC/RISP.

The protein resides in the mitochondrion inner membrane. Its function is as follows. Component of the MICOS complex, a large protein complex of the mitochondrial inner membrane that plays crucial roles in the maintenance of crista junctions, inner membrane architecture, and formation of contact sites to the outer membrane. Plays a role in keeping cristae membranes connected to the inner boundary membrane. Also promotes protein import via the mitochondrial intermembrane space assembly (MIA) pathway. Involved in the maintenance of mitochondria morphology. Binds to glycerolipids such as cardiolipin (CL). Contributes to the export of phosphatidylethanolamine (PE) from mitochondria and to the import of galactoglycerolipids from plastids during phosphate (Pi) starvation. Promotes lipid desorption from membranes, likely as an initial step for lipid transfer, and regulates probably the tethering between the inner and outer membranes of mitochondria by binding to TOM40 proteins. This is MICOS complex subunit MIC60, mitochondrial from Arabidopsis thaliana (Mouse-ear cress).